The following is a 151-amino-acid chain: Calcium-binding protein SPEC 2C (151 aa).

4 EF-hand domains span residues 10–45 (EQRK…IEIE), 46–78 (LTQE…KAEQ), 81–116 (GKGA…CTDP), and 118–151 (MTKE…QSSY). 18 residues coordinate Ca(2+): aspartate 23, aspartate 25, aspartate 27, lysine 29, glutamate 34, aspartate 59, aspartate 61, serine 63, glutamate 70, aspartate 94, aspartate 96, serine 98, serine 100, glutamate 105, aspartate 131, aspartate 135, glutamate 137, and glutamate 142.

Found in cell lineages giving rise to the aboral ectoderm, a squamous epithelium covering the surface of the late stage embryo and larva.

Calcium-binding protein involved in larval development and metamorphosis. Likely to function as calcium buffers mediating the transport of calcium from the sea water to the blastocoel where calcium is required for skeleton formation. In Strongylocentrotus purpuratus (Purple sea urchin), this protein is Calcium-binding protein SPEC 2C (SPEC2C).